A 212-amino-acid polypeptide reads, in one-letter code: Metalloproteinase inhibitor 3 (212 aa).

Positions methionine 1–alanine 24 are cleaved as a signal peptide. Cysteine 25 provides a ligand contact to Zn(2+). Involved in metalloproteinase-binding stretches follow at residues cysteine 25–valine 28 and glutamate 89–serine 90. Cystine bridges form between cysteine 25–cysteine 92, cysteine 27–cysteine 119, cysteine 37–cysteine 144, cysteine 146–cysteine 193, cysteine 151–cysteine 156, and cysteine 164–cysteine 185. One can recognise an NTR domain in the interval cysteine 25–cysteine 144.

The protein belongs to the protease inhibitor I35 (TIMP) family.

It localises to the secreted. The protein localises to the extracellular space. It is found in the extracellular matrix. Its function is as follows. Complexes with metalloproteinases (such as collagenases) and irreversibly inactivates them by binding to their catalytic zinc cofactor. May form part of a tissue-specific acute response to remodeling stimuli. This Gallus gallus (Chicken) protein is Metalloproteinase inhibitor 3 (TIMP3).